The sequence spans 366 residues: Reticulon-4-interacting protein 1, mitochondrial (366 aa).

A mitochondrion-targeting transit peptide spans 1-20 (MIEKMILRRFFSTKSSTMRA).

It belongs to the zinc-containing alcohol dehydrogenase family. Quinone oxidoreductase subfamily. Expressed in pharynx, muscles and intestine.

Its subcellular location is the mitochondrion. In terms of biological role, plays a role in oxygen metabolism in the mitochondria by regulating the levels of reactive oxygen species (ROS) thereby conferring resistance to oxidative stress. Involved in resistance to P.aeruginosa PA14 infection. Regulates lifespan. The protein is Reticulon-4-interacting protein 1, mitochondrial of Caenorhabditis elegans.